The sequence spans 416 residues: uncharacterized protein (416 aa).

The next 9 membrane-spanning stretches (helical) occupy residues 5-25 (LFLI…ILSL), 84-104 (ISGL…LKHV), 128-148 (AYVP…LFSI), 160-180 (LAFL…YLLW), 192-212 (VLLF…KFGF), 237-257 (PIYF…PVFL), 263-283 (FDKR…FYSL), 288-308 (LHHY…FYLT), and 312-332 (IKYA…GVYI).

Belongs to the glycosyltransferase 83 family.

It localises to the cell membrane. This is an uncharacterized protein from Aquifex aeolicus (strain VF5).